The following is a 195-amino-acid chain: MALVPMVVEQTNRGERSYDIYSRLLKERIIFLSDEVNDATASLVVAQLLFLESEDPDKDIQLYINSPGGSITAGMAIYDTMNYIKPDVSTICIGMAASMGAFLLTAGQKGKRFALPNAEIMIHQPLGGTRGQAEDIRIHTERILKMRETLNKIIAERTGQPLEKVQKDTDRDFFMEAEEARAYGIIDEVITTAKK.

Ser-98 functions as the Nucleophile in the catalytic mechanism. His-123 is an active-site residue.

It belongs to the peptidase S14 family. As to quaternary structure, fourteen ClpP subunits assemble into 2 heptameric rings which stack back to back to give a disk-like structure with a central cavity, resembling the structure of eukaryotic proteasomes.

It localises to the cytoplasm. It carries out the reaction Hydrolysis of proteins to small peptides in the presence of ATP and magnesium. alpha-casein is the usual test substrate. In the absence of ATP, only oligopeptides shorter than five residues are hydrolyzed (such as succinyl-Leu-Tyr-|-NHMec, and Leu-Tyr-Leu-|-Tyr-Trp, in which cleavage of the -Tyr-|-Leu- and -Tyr-|-Trp bonds also occurs).. Its function is as follows. Cleaves peptides in various proteins in a process that requires ATP hydrolysis. Has a chymotrypsin-like activity. Plays a major role in the degradation of misfolded proteins. The protein is ATP-dependent Clp protease proteolytic subunit of Alkaliphilus oremlandii (strain OhILAs) (Clostridium oremlandii (strain OhILAs)).